Consider the following 114-residue polypeptide: U-myrmeciitoxin(01)-Mg8a (114 aa).

The N-terminal stretch at 1-20 (MKLSTLLVAFVLLVITVILS) is a signal peptide. Residues 21–44 (TPSTNAKALAESNALAVAVSEAEP) constitute a propeptide that is removed on maturation.

Belongs to the formicidae venom precursor-01 superfamily. Expressed by the venom gland.

It localises to the secreted. May have antimicrobial properties, like most ant linear peptides. The chain is U-myrmeciitoxin(01)-Mg8a from Myrmecia gulosa (Red bulldog ant).